Consider the following 361-residue polypeptide: Cell cycle control protein 50A (361 aa).

The tract at residues 1 to 28 (MAMNYNAKDEVDGGPPCPPGGTAKTRRP) is disordered. Position 2 is an N-acetylalanine (Ala2). The tract at residues 2–48 (AMNYNAKDEVDGGPPCPPGGTAKTRRPDNTAFKQQRLPAWQPILTAG) is required for ATPase and aminophospholipid flippase activity. Topologically, residues 2 to 49 (AMNYNAKDEVDGGPPCPPGGTAKTRRPDNTAFKQQRLPAWQPILTAGT) are cytoplasmic. The segment at 49–348 (TVLPTFFIIG…LGVVLLVINH (300 aa)) is interaction with ATP8A2. A helical membrane pass occupies residues 50–70 (VLPTFFIIGLIFIPIGIGIFV). The Exoplasmic loop portion of the chain corresponds to 71-325 (TSNNIREIEI…SWMGGKNPFL (255 aa)). 3 disulfide bridges follow: Cys91-Cys104, Cys94-Cys102, and Cys157-Cys171. N-linked (GlcNAc...) asparagine glycans are attached at residues Asn180, Asn190, and Asn294. Residues 326–346 (GIAYITIGSISFLLGVVLLVI) traverse the membrane as a helical segment. Over 347–361 (NHKYRNSSNTADITI) the chain is Cytoplasmic.

The protein belongs to the CDC50/LEM3 family. Component of various P4-ATPase flippase complexes which consists of a catalytic alpha subunit and an accessory beta subunit. Interacts with ATP8A1 to form a flippase complex; this complex forms an intermediate phosphoenzyme. Interacts with ATP8A2 to form a flippase complex. ATP8B1:TMEM30A and ATP8B2:TMEM30A flippase complexes have been shown to form intermediate phosphoenzymes in vitro. Interacts with alpha subunits ATP8A1, ATP8B1, ATP8B2, ATP8B4, ATP10A, ATP10B, ATP10D, ATP11A, ATP11B and ATP11C. N-glycosylated; contributes to ATP8A2:TMEM30A flippase complex assembly but not to functional activity. As to expression, expressed in photoreceptor cells; detected in retina outer segment and other retinal layers (at protein level).

It is found in the membrane. Its subcellular location is the golgi apparatus. The protein resides in the cytoplasmic vesicle. The protein localises to the secretory vesicle membrane. It localises to the apical cell membrane. It is found in the photoreceptor inner segment. Its subcellular location is the cell projection. The protein resides in the cilium. The protein localises to the photoreceptor outer segment. Accessory component of a P4-ATPase flippase complex which catalyzes the hydrolysis of ATP coupled to the transport of aminophospholipids from the outer to the inner leaflet of various membranes and ensures the maintenance of asymmetric distribution of phospholipids. Phospholipid translocation also seems to be implicated in vesicle formation and in uptake of lipid signaling molecules. The beta subunit may assist in binding of the phospholipid substrate. Required for the proper folding, assembly and ER to Golgi exit of the ATP8A2:TMEM30A flippase complex. ATP8A2:TMEM30A may be involved in regulation of neurite outgrowth, and, reconstituted to liposomes, predomiminantly transports phosphatidylserine (PS) and to a lesser extent phosphatidylethanolamine (PE). The ATP8A1:TMEM30A flippase complex seems to play a role in regulation of cell migration probably involving flippase-mediated translocation of phosphatidylethanolamine (PE) at the plasma membrane. Required for the formation of the ATP8A2, ATP8B1 and ATP8B2 P-type ATPAse intermediate phosphoenzymes. Involved in uptake of platelet-activating factor (PAF). Can also mediate the export of alpha subunits ATP8A1, ATP8B1, ATP8B2, ATP8B4, ATP10A, ATP10B, ATP10D, ATP11A, ATP11B and ATP11C from the ER to other membrane localizations. The chain is Cell cycle control protein 50A from Bos taurus (Bovine).